Reading from the N-terminus, the 185-residue chain is Ribosome-recycling factor (185 aa).

The protein belongs to the RRF family.

It localises to the cytoplasm. Responsible for the release of ribosomes from messenger RNA at the termination of protein biosynthesis. May increase the efficiency of translation by recycling ribosomes from one round of translation to another. In Legionella pneumophila (strain Corby), this protein is Ribosome-recycling factor.